We begin with the raw amino-acid sequence, 368 residues long: Propane 2-monooxygenase, hydroxylase component small subunit (368 aa).

It belongs to the TmoE/XamoE family. The propane 2-monooxygenase multicomponent enzyme system is composed of an electron transfer component and a monooxygenase component interacting with the effector protein MimD. The electron transfer component is composed of a reductase (MimB), and the monooxygenase component is formed by a large subunit (MimA) and a small subunit (MimC). Requires the presence of the chaperonin-like protein MimG to ensure a productive folding, resulting of a soluble MimC, which leads to the active form of MimABCD.

It catalyses the reaction propane + NADH + O2 + H(+) = propan-2-ol + NAD(+) + H2O. The catalysed reaction is acetone + NADH + O2 + H(+) = hydroxyacetone + NAD(+) + H2O. The enzyme catalyses butan-2-one + NADH + O2 + H(+) = 1-hydroxy-2-butanone + NAD(+) + H2O. It carries out the reaction phenol + NADH + O2 + H(+) = hydroquinone + NAD(+) + H2O. Component of the propane 2-monooxygenase multicomponent enzyme system which is involved in the degradation of propane via the O2-dependent hydroxylation of propane. Also involved in the degradation of acetone via the O2-dependent hydroxylation of acetone. Also able to catalyze the oxidation of phenol, methylethylketone (2-butanone), 1-propanol and 2-propanol. This chain is Propane 2-monooxygenase, hydroxylase component small subunit, found in Mycolicibacterium goodii (Mycobacterium goodii).